Reading from the N-terminus, the 328-residue chain is Peroxisomal adenine nucleotide transporter 1 (328 aa).

Transmembrane regions (helical) follow at residues 1–21 (MLTLESALTGAVASAMANIAV), 78–98 (TVTTVATFVQNFVYFFWYTFI), 128–148 (LVLGVAAASISQLFTSPMAVV), 185–202 (LRTGLALTINPSITYASF), 226–246 (FILGVLSKMISTLVTQPLIVA), and 277–297 (WKGVLPQLTKGVIVQGLLFAF). Solcar repeat units follow at residues 1–101 (MLTL…IRKS), 122–208 (PSTI…LKEV), and 220–304 (LSAV…LTKS).

This sequence belongs to the mitochondrial carrier (TC 2.A.29) family.

It is found in the peroxisome membrane. In terms of biological role, adenine nucleotide transporter involved in the uniport of ATP and adenine nucleotide hetero-exchange transport between the cytosol and the peroxisomal lumen. This transport is accompanied by a proton transport from the peroxisomal lumen to the cytosol. Transport of ATP into the peroxisome is required for beta-oxidation of medium-chain fatty acids. Required for growth on medium-chain fatty acids, pH gradient formation in peroxisomes and for normal peroxisome proliferation. The sequence is that of Peroxisomal adenine nucleotide transporter 1 (ANT1) from Saccharomyces cerevisiae (strain ATCC 204508 / S288c) (Baker's yeast).